Here is a 48-residue protein sequence, read N- to C-terminus: Disintegrin accutin (48 aa).

Gln-1 carries the pyrrolidone carboxylic acid modification. One can recognise a Disintegrin domain in the interval 1–48; that stretch reads QGAQCTAGPCCWPCKFLKEGTICRRARGDDLDDYCNGISADCPRNPYY. Cystine bridges form between Cys-5/Cys-11, Cys-10/Cys-35, and Cys-23/Cys-42. The Cell attachment site signature appears at 27–29; sequence RGD.

It belongs to the venom metalloproteinase (M12B) family. P-II subfamily. P-IIa sub-subfamily. Monomer (disintegrin). In terms of tissue distribution, expressed by the venom gland.

The protein resides in the secreted. Inhibit human platelet aggregation induced by ADP, collagen, thrombin or the thromboxane analog U46619 in platelet suspension with IC(50) values of 66-267 nM. Acts by inhibiting fibrinogen interaction with platelet receptors GPIIb/GPIIIa (ITGA2B/ITGB3). It also inhibits angiogenesis in vivo and in vitro by blocking integrin alpha-V/beta-3 (ITGAV/ITGB3) of endothelial cells and by inducing apoptosis. In Deinagkistrodon acutus (Hundred-pace snake), this protein is Disintegrin accutin.